The chain runs to 567 residues: Low-affinity glucose transporter HXT3 (567 aa).

Polar residues predominate over residues 1–29 (MNSTPDLISPQKSSENSNADLPSNSSQVM). Residues 1-30 (MNSTPDLISPQKSSENSNADLPSNSSQVMN) are disordered. Topologically, residues 1–57 (MNSTPDLISPQKSSENSNADLPSNSSQVMNMPEEKGVQDDFQAEADQVLTNPNTGKG) are cytoplasmic. S23 carries the post-translational modification Phosphoserine. The chain crosses the membrane as a helical span at residues 58–78 (AYVTVSICCVMVAFGGFVFGW). The Extracellular portion of the chain corresponds to 79–113 (DTGTISGFVAQTDFLRRFGMKHKDGSYYLSKVRTG). Residues 114-134 (LIVSIFNIGCAIGGIILAKLG) form a helical membrane-spanning segment. Residues 135 to 140 (DMYGRK) are Cytoplasmic-facing. The helical transmembrane segment at 141-161 (MGLIVVVVIYIIGIIIQIASI) threads the bilayer. The Extracellular portion of the chain corresponds to 162–171 (NKWYQYFIGR). The chain crosses the membrane as a helical span at residues 172-192 (IISGLGVGGIAVLSPMLISEV). Topologically, residues 193–198 (APKEMR) are cytoplasmic. The helical transmembrane segment at 199 to 219 (GTLVSCYQLMITLGIFLGYCT) threads the bilayer. Topologically, residues 220–233 (NFGTKNYSNSVQWR) are extracellular. A glycan (N-linked (GlcNAc...) asparagine) is linked at N225. A helical transmembrane segment spans residues 234–254 (VPLGLCFAWALFMIGGMTFVP). Residues 255–337 (ESPRYLVEAG…IQSLQQLTGD (83 aa)) lie on the Cytoplasmic side of the membrane. A helical membrane pass occupies residues 338–354 (NYFFYYGTTVFNAVGMS). At 355-360 (DSFETS) the chain is on the extracellular side. The helical transmembrane segment at 361 to 378 (IVFGVVNFFSTCCSLYTV) threads the bilayer. Residues 379 to 385 (DRFGRRN) lie on the Cytoplasmic side of the membrane. A helical membrane pass occupies residues 386–406 (CLLYGAIGMVCCYVVYASVGV). Over 407–428 (TRLWPNGEGNGSSKGAGNCMIV) the chain is Extracellular. An N-linked (GlcNAc...) asparagine glycan is attached at N416. Residues 429–449 (FACFYIFCFATTWAPIAYVVI) form a helical membrane-spanning segment. The Cytoplasmic portion of the chain corresponds to 450-466 (SETFPLRVKSKAMSIAT). Residues 467-487 (AANWLWGFLIGFFTPFITGAI) traverse the membrane as a helical segment. N488 is a topological domain (extracellular). Residues 489-509 (FYYGYVFMGCMVFAYFYVFFF) form a helical membrane-spanning segment. At 510 to 567 (VPETKGLTLEEVNDMYAEGVLPWKSASWVPTSQRGANYDADALMHDDQPFYKKMFGKK) the chain is on the cytoplasmic side.

This sequence belongs to the major facilitator superfamily. Sugar transporter (TC 2.A.1.1) family.

It localises to the membrane. Its function is as follows. Low-affinity glucose transporter. This chain is Low-affinity glucose transporter HXT3 (HXT3), found in Saccharomyces cerevisiae (strain ATCC 204508 / S288c) (Baker's yeast).